Reading from the N-terminus, the 122-residue chain is Large ribosomal subunit protein uL14 (122 aa).

It belongs to the universal ribosomal protein uL14 family. In terms of assembly, part of the 50S ribosomal subunit. Forms a cluster with proteins L3 and L19. In the 70S ribosome, L14 and L19 interact and together make contacts with the 16S rRNA in bridges B5 and B8.

In terms of biological role, binds to 23S rRNA. Forms part of two intersubunit bridges in the 70S ribosome. The chain is Large ribosomal subunit protein uL14 from Shewanella sp. (strain ANA-3).